The chain runs to 179 residues: Peptidyl-tRNA hydrolase (179 aa).

Position 15 (Tyr15) interacts with tRNA. Catalysis depends on His20, which acts as the Proton acceptor. 3 residues coordinate tRNA: Tyr66, Asn68, and Asn114.

The protein belongs to the PTH family. As to quaternary structure, monomer.

It localises to the cytoplasm. The catalysed reaction is an N-acyl-L-alpha-aminoacyl-tRNA + H2O = an N-acyl-L-amino acid + a tRNA + H(+). In terms of biological role, hydrolyzes ribosome-free peptidyl-tRNAs (with 1 or more amino acids incorporated), which drop off the ribosome during protein synthesis, or as a result of ribosome stalling. Functionally, catalyzes the release of premature peptidyl moieties from peptidyl-tRNA molecules trapped in stalled 50S ribosomal subunits, and thus maintains levels of free tRNAs and 50S ribosomes. The polypeptide is Peptidyl-tRNA hydrolase (Chlamydia trachomatis serovar L2 (strain ATCC VR-902B / DSM 19102 / 434/Bu)).